The following is a 155-amino-acid chain: Small ribosomal subunit protein uS7c (155 aa).

This sequence belongs to the universal ribosomal protein uS7 family. As to quaternary structure, part of the 30S ribosomal subunit.

The protein localises to the plastid. It localises to the chloroplast. One of the primary rRNA binding proteins, it binds directly to 16S rRNA where it nucleates assembly of the head domain of the 30S subunit. In Typha angustifolia (Narrow leaf cattail), this protein is Small ribosomal subunit protein uS7c (rps7).